The following is a 304-amino-acid chain: Probable porphobilinogen deaminase (304 aa).

Position 240 is an S-(dipyrrolylmethanemethyl)cysteine (Cys240).

This sequence belongs to the HMBS family. It depends on dipyrromethane as a cofactor.

The enzyme catalyses 4 porphobilinogen + H2O = hydroxymethylbilane + 4 NH4(+). It participates in porphyrin-containing compound metabolism; protoporphyrin-IX biosynthesis; coproporphyrinogen-III from 5-aminolevulinate: step 2/4. Functionally, tetrapolymerization of the monopyrrole PBG into the hydroxymethylbilane pre-uroporphyrinogen in several discrete steps. The sequence is that of Probable porphobilinogen deaminase from Ignicoccus hospitalis (strain KIN4/I / DSM 18386 / JCM 14125).